The primary structure comprises 313 residues: uncharacterized protein (313 aa).

The 147-residue stretch at 6-152 (YDILENPEPN…YHASMEKMTG (147 aa)) folds into the N-acetyltransferase domain.

In terms of biological role, to the C-terminal of C.elegans F21C10.9. This is an uncharacterized protein from Caenorhabditis elegans.